The following is a 128-amino-acid chain: Ribosome-binding factor A (128 aa).

Belongs to the RbfA family. As to quaternary structure, monomer. Binds 30S ribosomal subunits, but not 50S ribosomal subunits or 70S ribosomes.

It is found in the cytoplasm. Functionally, one of several proteins that assist in the late maturation steps of the functional core of the 30S ribosomal subunit. Associates with free 30S ribosomal subunits (but not with 30S subunits that are part of 70S ribosomes or polysomes). Required for efficient processing of 16S rRNA. May interact with the 5'-terminal helix region of 16S rRNA. The chain is Ribosome-binding factor A from Geobacillus thermodenitrificans (strain NG80-2).